The primary structure comprises 331 residues: Very-long-chain 3-oxoacyl-CoA reductase (331 aa).

Residues 15-35 (VQWALAGVGALYISAKVLSYL) form a helical membrane-spanning segment. NADP(+) is bound by residues V60, D115, D123, N142, Y209, K213, I242, and S244. Residue Y209 is the Proton donor of the active site. The active-site Lowers pKa of active site Tyr is the K213.

It belongs to the short-chain dehydrogenases/reductases (SDR) family.

The protein resides in the endoplasmic reticulum membrane. It carries out the reaction a very-long-chain (3R)-3-hydroxyacyl-CoA + NADP(+) = a very-long-chain 3-oxoacyl-CoA + NADPH + H(+). The protein operates within lipid metabolism; fatty acid biosynthesis. In terms of biological role, component of the microsomal membrane bound fatty acid elongation system, which produces the 26-carbon very long-chain fatty acids (VLCFA) from palmitate. Catalyzes the reduction of the 3-ketoacyl-CoA intermediate that is formed in each cycle of fatty acid elongation. VLCFAs serve as precursors for ceramide and sphingolipids. The protein is Very-long-chain 3-oxoacyl-CoA reductase of Pyricularia oryzae (strain 70-15 / ATCC MYA-4617 / FGSC 8958) (Rice blast fungus).